The sequence spans 344 residues: Succinylglutamate desuccinylase (344 aa).

Residues histidine 63, glutamate 66, and histidine 160 each contribute to the Zn(2+) site. Glutamate 224 is an active-site residue.

This sequence belongs to the AspA/AstE family. Succinylglutamate desuccinylase subfamily. Requires Zn(2+) as cofactor.

It catalyses the reaction N-succinyl-L-glutamate + H2O = L-glutamate + succinate. The protein operates within amino-acid degradation; L-arginine degradation via AST pathway; L-glutamate and succinate from L-arginine: step 5/5. Functionally, transforms N(2)-succinylglutamate into succinate and glutamate. This chain is Succinylglutamate desuccinylase, found in Shewanella sp. (strain MR-4).